The following is a 461-amino-acid chain: Homocitrate synthase (461 aa).

In terms of domain architecture, Pyruvate carboxyltransferase spans 4–259 (VGILDSTLRE…IEVVKLDKLQ (256 aa)). 2-oxoglutarate is bound at residue arginine 12. Mg(2+) is bound at residue glutamate 13. 2-oxoglutarate-binding residues include histidine 76, arginine 136, and threonine 170. The Mg(2+) site is built by histidine 198 and histidine 200. Histidine 292 functions as the Proton acceptor in the catalytic mechanism.

Belongs to the alpha-IPM synthase/homocitrate synthase family. Homocitrate synthase LYS20/LYS21 subfamily. Mg(2+) serves as cofactor. The cofactor is Mn(2+).

The catalysed reaction is acetyl-CoA + 2-oxoglutarate + H2O = (2R)-homocitrate + CoA + H(+). It participates in amino-acid biosynthesis; L-lysine biosynthesis via AAA pathway; L-alpha-aminoadipate from 2-oxoglutarate: step 1/5. Its function is as follows. Catalyzes the aldol-type condensation of 2-oxoglutarate with acetyl-CoA to yield homocitrate. Carries out the first step of the alpha-aminoadipate (AAA) lysine biosynthesis pathway. The sequence is that of Homocitrate synthase from Saccharolobus islandicus (strain L.S.2.15 / Lassen #1) (Sulfolobus islandicus).